Here is a 750-residue protein sequence, read N- to C-terminus: Xylosyl- and glucuronyltransferase LARGE2s (750 aa).

The Cytoplasmic segment spans residues 1–10; that stretch reads MLCPCRGKLK. A helical; Signal-anchor for type II membrane protein membrane pass occupies residues 11–31; that stretch reads LLVVSLSFVILFTWLYLLVGN. Residues 32 to 750 are Lumenal-facing; it reads SENGRSLLLS…LKYLTAQRNI (719 aa). N-linked (GlcNAc...) asparagine glycans are attached at residues N116, N142, and N228. The interval 132–407 is xylosyltransferase activity; sequence LHVACVCAGH…FLEYDGNLLR (276 aa). Mn(2+)-binding residues include D236 and D238. N266 is a glycosylation site (N-linked (GlcNAc...) asparagine). The segment at 408 to 750 is glucuronyltransferase activity; that stretch reads RELFGCPSQA…LKYLTAQRNI (343 aa). Residues D557 and D559 each contribute to the Mn(2+) site.

It in the C-terminal section; belongs to the glycosyltransferase 49 family. This sequence in the N-terminal section; belongs to the glycosyltransferase 8 family. Requires Mn(2+) as cofactor.

It localises to the golgi apparatus membrane. It carries out the reaction 3-O-[beta-D-GlcA-(1-&gt;3)-beta-D-Xyl-(1-&gt;4)-Rib-ol-P-Rib-ol-P-3-beta-D-GalNAc-(1-&gt;3)-beta-D-GlcNAc-(1-&gt;4)-(O-6-P-alpha-D-Man)]-Thr-[protein] + UDP-alpha-D-xylose = 3-O-[alpha-D-Xyl-(1-&gt;3)-beta-D-GlcA-(1-&gt;4)-beta-D-Xyl-(1-&gt;4)-Rib-ol-P-Rib-ol-P-3-beta-D-GalNAc-(1-&gt;3)-beta-D-GlcNAc-(1-&gt;4)-(O-6-P-alpha-D-Man)]-Thr-[protein] + UDP + H(+). It catalyses the reaction 3-O-{(1-&gt;[3)-alpha-D-Xyl-(1-&gt;3)-beta-D-GlcA-(1-&gt;](n)-4)-beta-D-Xyl-(1-&gt;4)-Rib-ol-P-Rib-ol-P-3-beta-D-GalNAc-(1-&gt;3)-beta-D-GlcNAc-(1-&gt;4)-O-6-P-alpha-D-Man}-L-Thr-[protein] + UDP-alpha-D-glucuronate = 3-O-{beta-D-GlcA-(1-&gt;[3)-alpha-D-Xyl-(1-&gt;3)-beta-D-GlcA-(1-&gt;](n)-4)-beta-D-Xyl-(1-&gt;4)-Rib-ol-P-Rib-ol-P-3-beta-D-GalNAc-(1-&gt;3)-beta-D-GlcNAc-(1-&gt;4)-O-6-P-alpha-D-Man}-L-Thr-[protein] + UDP + H(+). The enzyme catalyses 3-O-{beta-D-GlcA-(1-&gt;[3)-alpha-D-Xyl-(1-&gt;3)-beta-D-GlcA-(1-&gt;](n)-4)-beta-D-Xyl-(1-&gt;4)-Rib-ol-P-Rib-ol-P-3-beta-D-GalNAc-(1-&gt;3)-beta-D-GlcNAc-(1-&gt;4)-O-6-P-alpha-D-Man}-L-Thr-[protein] + UDP-alpha-D-xylose = 3-O-{(1-&gt;[3)-alpha-D-Xyl-(1-&gt;3)-beta-D-GlcA-(1-&gt;](n+1)-4)-beta-D-Xyl-(1-&gt;4)-Rib-ol-P-Rib-ol-P-3-beta-D-GalNAc-(1-&gt;3)-beta-D-GlcNAc-(1-&gt;4)-O-6-P-alpha-D-Man}-L-Thr-[protein] + UDP + H(+). Its pathway is protein modification; protein glycosylation. Bifunctional glycosyltransferase with both alpha-1,3-xylosyltransferase and beta-1,3-glucuronyltransferase activities involved in the maturation of alpha-dystroglycan (DAG1) by glycosylation leading to DAG1 binding to laminin G-like domain-containing extracellular proteins with high affinity and in a phosphorylated-O-mannosyl trisaccharide dependent manner. Elongates the glucuronyl-beta-1,4-xylose-beta disaccharide primer structure by adding repeating units [-3-Xylose-alpha-1,3-GlcA-beta-1-] to produce a heteropolysaccharide. Supports the maturation of DAG1 more effectively than LARGE1. In addition, can modify both heparan sulfate (HS)- and chondroitin/dermatan sulfate (CS/DS)-proteoglycans (PGs), namely GPC4, with a glycosaminoglycan (GAG)-like polysaccharide composed of xylose and glucuronic acid to confer laminin binding. The polypeptide is Xylosyl- and glucuronyltransferase LARGE2s (Danio rerio (Zebrafish)).